A 598-amino-acid polypeptide reads, in one-letter code: Trichothecene efflux pump TRI12 (598 aa).

Residues 42-62 form a helical membrane-spanning segment; sequence IVASFAAFSMNVVATYFVLQA. Asn-79 is a glycosylation site (N-linked (GlcNAc...) asparagine). A run of 2 helical transmembrane segments spans residues 109–129 and 135–155; these read PFVI…CTAT and LAAM…PLFI. Asn-161 is a glycosylation site (N-linked (GlcNAc...) asparagine). A run of 10 helical transmembrane segments spans residues 165 to 185, 197 to 217, 241 to 261, 273 to 293, 312 to 332, 356 to 376, 381 to 401, 409 to 429, 442 to 462, and 533 to 553; these read FLGL…SPYL, WIFY…IIWY, WIGI…VSWG, VIGL…YEVY, FVCI…LVIM, ATAS…FHLV, WQIL…SSIN, IALS…TMLL, AFAV…AAFI, and ANVY…SLCM. A disordered region spans residues 579-598; the sequence is LEGNSESQPSPIILSMADKE.

It belongs to the major facilitator superfamily.

Its subcellular location is the cell membrane. Its function is as follows. Efflux pump that provides the dual role of trichothecene export and self-protection by allowing the fungus to evade the harmful effect of its own trichothecene production. This is Trichothecene efflux pump TRI12 from Fusarium sporotrichioides.